Reading from the N-terminus, the 561-residue chain is Arginine--tRNA ligase (561 aa).

A 'HIGH' region motif is present at residues 129–139 (ANPTGPLHVGH).

This sequence belongs to the class-I aminoacyl-tRNA synthetase family. Monomer.

It localises to the cytoplasm. It carries out the reaction tRNA(Arg) + L-arginine + ATP = L-arginyl-tRNA(Arg) + AMP + diphosphate. This chain is Arginine--tRNA ligase, found in Bordetella bronchiseptica (strain ATCC BAA-588 / NCTC 13252 / RB50) (Alcaligenes bronchisepticus).